The following is a 368-amino-acid chain: Chorismate synthase (368 aa).

Arg46 contacts NADP(+). Residues Arg123 to Ser125, Asn240 to Ala241, Gly285, Lys300 to Thr304, and Arg326 contribute to the FMN site.

It belongs to the chorismate synthase family. In terms of assembly, homotetramer. Requires FMNH2 as cofactor.

The enzyme catalyses 5-O-(1-carboxyvinyl)-3-phosphoshikimate = chorismate + phosphate. It participates in metabolic intermediate biosynthesis; chorismate biosynthesis; chorismate from D-erythrose 4-phosphate and phosphoenolpyruvate: step 7/7. In terms of biological role, catalyzes the anti-1,4-elimination of the C-3 phosphate and the C-6 proR hydrogen from 5-enolpyruvylshikimate-3-phosphate (EPSP) to yield chorismate, which is the branch point compound that serves as the starting substrate for the three terminal pathways of aromatic amino acid biosynthesis. This reaction introduces a second double bond into the aromatic ring system. This is Chorismate synthase from Porphyromonas gingivalis (strain ATCC BAA-308 / W83).